A 61-amino-acid polypeptide reads, in one-letter code: Small ribosomal subunit protein uS14 (61 aa).

Residues Cys-24, Cys-27, Cys-40, and Cys-43 each coordinate Zn(2+).

The protein belongs to the universal ribosomal protein uS14 family. Zinc-binding uS14 subfamily. In terms of assembly, part of the 30S ribosomal subunit. Contacts proteins S3 and S10. Zn(2+) serves as cofactor.

Binds 16S rRNA, required for the assembly of 30S particles and may also be responsible for determining the conformation of the 16S rRNA at the A site. This Thermosipho melanesiensis (strain DSM 12029 / CIP 104789 / BI429) protein is Small ribosomal subunit protein uS14.